A 642-amino-acid chain; its full sequence is Threonine--tRNA ligase (642 aa).

Residues 1–63 (MNDITVTLPD…YNDARVVIVT (63 aa)) enclose the TGS domain. Residues 242–533 (DHRKIGQELD…LIEHFNGKFP (292 aa)) are catalytic. The Zn(2+) site is built by cysteine 334, histidine 385, and histidine 510.

This sequence belongs to the class-II aminoacyl-tRNA synthetase family. Homodimer. It depends on Zn(2+) as a cofactor.

The protein localises to the cytoplasm. The catalysed reaction is tRNA(Thr) + L-threonine + ATP = L-threonyl-tRNA(Thr) + AMP + diphosphate + H(+). In terms of biological role, catalyzes the attachment of threonine to tRNA(Thr) in a two-step reaction: L-threonine is first activated by ATP to form Thr-AMP and then transferred to the acceptor end of tRNA(Thr). This is Threonine--tRNA ligase from Haloquadratum walsbyi (strain DSM 16790 / HBSQ001).